The primary structure comprises 140 residues: Small ribosomal subunit protein eS17x (140 aa).

This sequence belongs to the eukaryotic ribosomal protein eS17 family.

This chain is Small ribosomal subunit protein eS17x (RPS17C), found in Arabidopsis thaliana (Mouse-ear cress).